Consider the following 356-residue polypeptide: Cysteine proteinase 3 (356 aa).

The signal sequence occupies residues 1 to 16; that stretch reads MSRLSLVLILVAGLFA. The propeptide at 17–138 is activation peptide; the sequence is TALAGPATFA…KGNLKLTNVV (122 aa). N123 carries N-linked (GlcNAc...) asparagine glycosylation. 2 disulfide bridges follow: C160–C203 and C194–C236. Residue C163 is part of the active site. The N-linked (GlcNAc...) asparagine glycan is linked to N252. C294 and C344 are disulfide-bonded. Catalysis depends on residues H303 and N323.

This sequence belongs to the peptidase C1 family. As to expression, predominantly expressed in stem and root.

The protein resides in the vacuole. The protein is Cysteine proteinase 3 (CYP-3) of Solanum lycopersicum (Tomato).